A 380-amino-acid chain; its full sequence is Cytochrome b (380 aa).

A run of 4 helical transmembrane segments spans residues 34 to 54, 78 to 99, 114 to 134, and 179 to 199; these read FGSLLALCLMTQILTGLLLAM, WLIRNMHANGASFFFICIYLHI, WNTGVLLLLTLMATAFVGYVL, and FFALHFLLPFMIAGLTLIHLT. Heme b-binding residues include histidine 84 and histidine 98. Residues histidine 183 and histidine 197 each coordinate heme b. A ubiquinone is bound at residue histidine 202. 4 consecutive transmembrane segments (helical) span residues 227–247, 289–309, 321–341, and 348–368; these read LKDALGLALLLLPLTTMALFS, LGGVLALAASVLVLFLSPLLH, LSQLLFWTLVANLLILTWIGS, and FIIIGQLASTTYFIILLILFP.

This sequence belongs to the cytochrome b family. As to quaternary structure, the cytochrome bc1 complex contains 11 subunits: 3 respiratory subunits (MT-CYB, CYC1 and UQCRFS1), 2 core proteins (UQCRC1 and UQCRC2) and 6 low-molecular weight proteins (UQCRH/QCR6, UQCRB/QCR7, UQCRQ/QCR8, UQCR10/QCR9, UQCR11/QCR10 and a cleavage product of UQCRFS1). This cytochrome bc1 complex then forms a dimer. Heme b serves as cofactor.

It localises to the mitochondrion inner membrane. In terms of biological role, component of the ubiquinol-cytochrome c reductase complex (complex III or cytochrome b-c1 complex) that is part of the mitochondrial respiratory chain. The b-c1 complex mediates electron transfer from ubiquinol to cytochrome c. Contributes to the generation of a proton gradient across the mitochondrial membrane that is then used for ATP synthesis. The sequence is that of Cytochrome b (MT-CYB) from Oceanodroma tethys (Wedge-rumped storm-petrel).